Consider the following 181-residue polypeptide: Large ribosomal subunit protein uL10 (181 aa).

The protein belongs to the universal ribosomal protein uL10 family. As to quaternary structure, part of the ribosomal stalk of the 50S ribosomal subunit. The N-terminus interacts with L11 and the large rRNA to form the base of the stalk. The C-terminus forms an elongated spine to which L12 dimers bind in a sequential fashion forming a multimeric L10(L12)X complex.

Forms part of the ribosomal stalk, playing a central role in the interaction of the ribosome with GTP-bound translation factors. In Nostoc sp. (strain PCC 7120 / SAG 25.82 / UTEX 2576), this protein is Large ribosomal subunit protein uL10.